Consider the following 332-residue polypeptide: Ribosomal RNA small subunit methyltransferase C (332 aa).

It belongs to the methyltransferase superfamily. RsmC family. As to quaternary structure, monomer.

The protein localises to the cytoplasm. The catalysed reaction is guanosine(1207) in 16S rRNA + S-adenosyl-L-methionine = N(2)-methylguanosine(1207) in 16S rRNA + S-adenosyl-L-homocysteine + H(+). Specifically methylates the guanine in position 1207 of 16S rRNA in the 30S particle. The polypeptide is Ribosomal RNA small subunit methyltransferase C (Pseudomonas putida (strain ATCC 700007 / DSM 6899 / JCM 31910 / BCRC 17059 / LMG 24140 / F1)).